Here is a 386-residue protein sequence, read N- to C-terminus: Phosphoglycerate kinase (386 aa).

Residues 21–23, Arg-36, 59–62, Arg-113, and Arg-146 contribute to the substrate site; these read DLN and HLGR. ATP-binding positions include Lys-197, Glu-314, and 340 to 343; that span reads GGDT.

The protein belongs to the phosphoglycerate kinase family. Monomer.

Its subcellular location is the cytoplasm. The enzyme catalyses (2R)-3-phosphoglycerate + ATP = (2R)-3-phospho-glyceroyl phosphate + ADP. The protein operates within carbohydrate degradation; glycolysis; pyruvate from D-glyceraldehyde 3-phosphate: step 2/5. This Marinobacter nauticus (strain ATCC 700491 / DSM 11845 / VT8) (Marinobacter aquaeolei) protein is Phosphoglycerate kinase.